A 355-amino-acid polypeptide reads, in one-letter code: MFTLSDFDFNLPPELIAQTALPDRTASRLLEVDGSVAPARLVDRHFAELPSCIAPGDLLVFNDTKVLKARFFGQKASGGKIEVLIERVTGTHTALAQIRASKSPGAGTTLRLADAFDVTVGERVEPFFTLHFPAPCLDLIEQHGRLPLPPYIEHDADATDETRYQTVYASNPGAVAAPTAGLHFDQPLLEKLDAMGVERATLTLHVGAGTFQPVRVENIAEHKMHSEWYDLPQSLVDKIAATRARGGNVIAVGTTSMRALEAAARSADEAGRPLAATQAETDIFITPGYRFRVVDRLVTNFHLPKSTLLMLVSAFAGVETIRAAYRHAIEERYRFFSYGDAMLLTRRDTPEAPGA.

It belongs to the QueA family. Monomer.

It localises to the cytoplasm. It carries out the reaction 7-aminomethyl-7-carbaguanosine(34) in tRNA + S-adenosyl-L-methionine = epoxyqueuosine(34) in tRNA + adenine + L-methionine + 2 H(+). It participates in tRNA modification; tRNA-queuosine biosynthesis. Transfers and isomerizes the ribose moiety from AdoMet to the 7-aminomethyl group of 7-deazaguanine (preQ1-tRNA) to give epoxyqueuosine (oQ-tRNA). This is S-adenosylmethionine:tRNA ribosyltransferase-isomerase from Burkholderia orbicola (strain MC0-3).